Here is a 491-residue protein sequence, read N- to C-terminus: 3-phosphoinositide-dependent protein kinase 1 (491 aa).

The 268-residue stretch at 44 to 311 (FEFGKIYGVG…YVALKRHPFF (268 aa)) folds into the Protein kinase domain. Residues 54 to 56 (SYS) and K73 each bind ATP. Residues 75–119 (MDKKFITKENKTAYVKLERIVLDQLEHPGIIKLYFTFQDTSSLYM) form a PIF-pocket region. A PIF-binding region spans residues 77-112 (KKFITKENKTAYVKLERIVLDQLEHPGIIKLYFTFQ). Residues 122-124 (ESC) and E128 each bind ATP. D167 (proton acceptor) is an active-site residue. An ATP-binding site is contributed by E171. A Phosphoserine modification is found at S177. D185 contributes to the ATP binding site. Residues 185-222 (DFGSVKPMQDSQITVLPNAASDDKACTFVGTAAYVPPE) are activation loop. Phosphothreonine; by autocatalysis is present on T211. 2 positions are modified to phosphoserine: S276 and S337. The interval 321-377 (SQTPPKLAPDPASQTASPERDDTHGSPWNLTHIGDSLATQNEGHSAPPTSSESSGSI) is disordered. Low complexity predominate over residues 365–376 (SAPPTSSESSGS). Phosphoserine is present on S382. Residues 386–491 (FDSRWQQFLE…KKAIETLQNR (106 aa)) form the PH domain.

It belongs to the protein kinase superfamily. AGC Ser/Thr protein kinase family. PDPK1 subfamily. Interacts with AGC1-5 and AGC1-7. Interacts with the C-terminal PIF domain of the protein kinases D6PK/AGC1-1, OXI1/AGC2-1 and PID. In terms of processing, phosphorylation on Thr-211 in the activation loop is required for full activity. PDK1 itself can autophosphorylate Thr-211, leading to its own activation. In terms of tissue distribution, ubiquitous.

The protein localises to the cytoplasm. It is found in the membrane. The catalysed reaction is L-seryl-[protein] + ATP = O-phospho-L-seryl-[protein] + ADP + H(+). It carries out the reaction L-threonyl-[protein] + ATP = O-phospho-L-threonyl-[protein] + ADP + H(+). Activated by phosphatidic acid (PA) and in response to the fungal elicitor xylanase. Its function is as follows. May couple lipid signals to the activation-loop phosphorylation of several protein kinases of the so-called AGC kinase family. Interacts via its pleckstrin homology domain with phosphatidic acid, PtdIns3P and PtdIns(3,4)P2 and to a lesser extent with PtdIns(4,5)P2 and PtdIns4P. May play a general role in signaling processes controlling the pathogen/stress response, polar auxin transport and development. Transphosphorylates the AGC protein kinases OXI1/AGC2-1, PK1/S6K1, PK19/S6K2 and PID resulting in their activation. The polypeptide is 3-phosphoinositide-dependent protein kinase 1 (PDPK1) (Arabidopsis thaliana (Mouse-ear cress)).